The following is a 490-amino-acid chain: Angiopoietin-related protein 1 (490 aa).

A signal peptide spans 1–22; sequence MKAFVWTLSVLLFLLGSGHCKG. Residues 79–167 adopt a coiled-coil conformation; that stretch reads ITRMDLENLK…LNVTTEMLKM (89 aa). 2 N-linked (GlcNAc...) asparagine glycosylation sites follow: asparagine 159 and asparagine 187. The Fibrinogen C-terminal domain maps to 270–490; that stretch reads FINEGPFKDC…AVQMMIKPID (221 aa). Cystine bridges form between cysteine 279–cysteine 308 and cysteine 431–cysteine 444.

It is found in the secreted. This Mus musculus (Mouse) protein is Angiopoietin-related protein 1 (Angptl1).